A 259-amino-acid chain; its full sequence is Sphinganine C4-monooxygenase 2 (259 aa).

3 helical membrane-spanning segments follow: residues 10-30, 54-74, and 91-111; these read FLGT…YICL, AVVK…VILF, and ILLL…WQYF. Residues 98–234 enclose the Fatty acid hydroxylase domain; the sequence is FIIAMLVIDT…FVMWDRILGT (137 aa). The short motif at 113–117 is the Histidine box-1 element; it reads HRYMH. Residues 127-131 carry the Histidine box-2 motif; the sequence is HSQHH. Positions 206 to 212 match the Histidine box-3 motif; that stretch reads YHDVHHQ.

Belongs to the sterol desaturase family. Fe cation is required as a cofactor. As to expression, ubiquitous, with higher levels in flowers and roots.

It localises to the endoplasmic reticulum membrane. The catalysed reaction is a dihydroceramide + 2 Fe(II)-[cytochrome b5] + O2 + 2 H(+) = a phytoceramide + 2 Fe(III)-[cytochrome b5] + H2O. The protein operates within membrane lipid metabolism; sphingolipid biosynthesis. Its function is as follows. Involved in sphingolipid trihydroxy long-chain base (4-hydroxysphinganine) biosynthesis. Can use C18- and C20-sphinganine as substrates to produce C18- and C20-phytosphinganines (D-ribo-2-amino-1,3,4-trihydroxyoctadecane and -eicosane). The protein is Sphinganine C4-monooxygenase 2 (SBH2) of Arabidopsis thaliana (Mouse-ear cress).